Consider the following 304-residue polypeptide: DCN1-like protein 3 (304 aa).

2 disordered regions span residues 1–87 and 284–304; these read MGQC…EESS and EVEGRGTLSSGQEGLCPEEQT. A lipid anchor (N-myristoyl glycine) is attached at Gly2. Residues 86-278 form the DCUN1 domain; that stretch reads SSLQRLEELF…LFDTFVEWEM (193 aa).

As to quaternary structure, part of a complex containing DCUN1D3, CUL3 and RBX1. Interacts (via the DCUN1 domain) with the unneddylated cullins: interacts with CUL1, CUL2, CUL3, CUL4A, CUL4B and CUL5; these interactions promote the cullin neddylation and the identity of the cullin dictates the affinity of the interaction. Interacts preferentially with CUL3; this interaction triggers the relocalization of CUL3 to the cell membrane where CUL3 is neddylated. Interacts (via DCUN1 domain) with RBX1. May also interact with regulators or subunits of cullin-RING ligases such as RNF7, ELOB and DDB1; these interactions are bridged by cullins. Interacts (via DCUN1 domain) with CAND1; this interaction is bridged by cullins and strongly inhibits cullin neddylation. These CAND-cullin-DCNL complexes can only be neddylated in the presence of a substrate adapter. Interacts (via DCUN1 domain) with the N-terminally acetylated form of UBE2M and UBE2F. In terms of tissue distribution, highest levels of expression are in the testis. Very low levels of expression in the heart, brain, skeletal muscle, kidney, liver, spleen, lung and ovary.

It is found in the cell membrane. The protein localises to the cytoplasm. It localises to the nucleus. Its subcellular location is the perinuclear region. Its function is as follows. Contributes to the neddylation of all cullins by transferring NEDD8 from N-terminally acetylated NEDD8-conjugating E2s enzyme to different cullin C-terminal domain-RBX complexes and may play a role in the cell cycle progression by regulating the SCF ubiquitin E3 ligase complex, after UV damage. At the cell membrane, can promote and as well inhibit cullins neddylation. The chain is DCN1-like protein 3 from Mus musculus (Mouse).